The sequence spans 130 residues: Small ribosomal subunit protein uS11 (130 aa).

The protein belongs to the universal ribosomal protein uS11 family. As to quaternary structure, part of the 30S ribosomal subunit. Interacts with proteins S7 and S18. Binds to IF-3.

Located on the platform of the 30S subunit, it bridges several disparate RNA helices of the 16S rRNA. Forms part of the Shine-Dalgarno cleft in the 70S ribosome. In Shewanella baltica (strain OS223), this protein is Small ribosomal subunit protein uS11.